A 285-amino-acid chain; its full sequence is Elongation factor Ts (285 aa).

The segment at 75 to 78 (TDFV) is involved in Mg(2+) ion dislocation from EF-Tu.

The protein belongs to the EF-Ts family.

The protein resides in the cytoplasm. Functionally, associates with the EF-Tu.GDP complex and induces the exchange of GDP to GTP. It remains bound to the aminoacyl-tRNA.EF-Tu.GTP complex up to the GTP hydrolysis stage on the ribosome. This chain is Elongation factor Ts, found in Alcanivorax borkumensis (strain ATCC 700651 / DSM 11573 / NCIMB 13689 / SK2).